Here is a 262-residue protein sequence, read N- to C-terminus: Type III pantothenate kinase (262 aa).

9–16 provides a ligand contact to ATP; it reads DIGNTNVK. Residues Tyr-103 and 110–113 each bind substrate; that span reads GADR. The active-site Proton acceptor is Asp-112. Asp-134 lines the K(+) pocket. Thr-137 is a binding site for ATP. Thr-190 contributes to the substrate binding site.

Belongs to the type III pantothenate kinase family. As to quaternary structure, homodimer. Requires NH4(+) as cofactor. It depends on K(+) as a cofactor.

It is found in the cytoplasm. The catalysed reaction is (R)-pantothenate + ATP = (R)-4'-phosphopantothenate + ADP + H(+). Its pathway is cofactor biosynthesis; coenzyme A biosynthesis; CoA from (R)-pantothenate: step 1/5. Functionally, catalyzes the phosphorylation of pantothenate (Pan), the first step in CoA biosynthesis. The polypeptide is Type III pantothenate kinase (Nitratidesulfovibrio vulgaris (strain ATCC 29579 / DSM 644 / CCUG 34227 / NCIMB 8303 / VKM B-1760 / Hildenborough) (Desulfovibrio vulgaris)).